The following is a 334-amino-acid chain: Nucleoid-associated protein YPTS_1390 (334 aa).

The protein belongs to the YejK family.

It localises to the cytoplasm. Its subcellular location is the nucleoid. In Yersinia pseudotuberculosis serotype IB (strain PB1/+), this protein is Nucleoid-associated protein YPTS_1390.